The primary structure comprises 326 residues: Melanocortin receptor 4 (326 aa).

Residues 1–14 (MNTSHHHGLHHSFR) show a composition bias toward basic residues. A disordered region spans residues 1-31 (MNTSHHHGLHHSFRNHSQGALPVGKPSHGDR). Topologically, residues 1 to 46 (MNTSHHHGLHHSFRNHSQGALPVGKPSHGDRGSASGCYEQLLISTE) are extracellular. Asn2 and Asn15 each carry an N-linked (GlcNAc...) asparagine glycan. The helical transmembrane segment at 47 to 67 (IFLTLGLVSLLENILVIAAIV) threads the bilayer. Residues 68–71 (KNKN) are Cytoplasmic-facing. Residues 72-92 (LHSPMYFFICSLAVADLLVSV) traverse the membrane as a helical segment. Residues 93-121 (SNASETVVMALITGGNLTNRESIIKNMDN) lie on the Extracellular side of the membrane. N-linked (GlcNAc...) asparagine glycosylation is found at Asn94 and Asn108. The helical transmembrane segment at 122 to 142 (VFDSMICSSLLASIWSLLAIA) threads the bilayer. At 143-163 (VDRYITIFYALRYHNIMTQRR) the chain is on the cytoplasmic side. A helical transmembrane segment spans residues 164–184 (AGTIITCIWTFCTVSGVLFIV). The Extracellular segment spans residues 185 to 190 (YSESTT). Residues 191-211 (VLICLISMFFTMLALMASLYV) traverse the membrane as a helical segment. At 212–246 (HMFLLARLHMKRIAALPGNGPIWQAANMKGAITIT) the chain is on the cytoplasmic side. The chain crosses the membrane as a helical span at residues 247–267 (ILLGVFVVCWAPFFLHLILMI). Residues 268 to 281 (SCPRNPYCVCFMSH) are Extracellular-facing. A helical transmembrane segment spans residues 282–302 (FNMYLILIMCNSVIDPLIYAF). Residues 303-326 (RSQEMRKTFKEICCCWYGLASLCV) are Cytoplasmic-facing. Cys316 carries S-palmitoyl cysteine lipidation.

It belongs to the G-protein coupled receptor 1 family. In terms of assembly, homodimer; disulfide-linked, also forms higher order oligomers. Interacts with mrap2a; decreasing ligand-sensitivity. Interacts with mrap2b; increasing ligand-sensitivity and generation of cAMP.

Its subcellular location is the cell membrane. Its function is as follows. Receptor specific to the heptapeptide core common to adrenocorticotropic hormone and alpha-, beta-, and gamma-MSH. Plays a central role in energy homeostasis and somatic growth. This receptor is mediated by G proteins that stimulate adenylate cyclase (cAMP). This Danio rerio (Zebrafish) protein is Melanocortin receptor 4 (mc4r).